Reading from the N-terminus, the 559-residue chain is 2,3-bisphosphoglycerate-independent phosphoglycerate mutase (559 aa).

Mn(2+) contacts are provided by Asp28 and Ser81. The Phosphoserine intermediate role is filled by Ser81. Substrate is bound by residues His140, 170 to 171, Arg206, Arg213, 286 to 289, and Lys361; these read RD and RADR. Mn(2+) is bound by residues Asp430, His434, Asp471, His472, and His501.

Belongs to the BPG-independent phosphoglycerate mutase family. Monomer. The cofactor is Mn(2+). Found ubiquitously in germinating seed.

The protein resides in the cytoplasm. It catalyses the reaction (2R)-2-phosphoglycerate = (2R)-3-phosphoglycerate. The protein operates within carbohydrate degradation; glycolysis; pyruvate from D-glyceraldehyde 3-phosphate: step 3/5. In terms of biological role, catalyzes the interconversion of 2-phosphoglycerate and 3-phosphoglycerate. The polypeptide is 2,3-bisphosphoglycerate-independent phosphoglycerate mutase (Nicotiana tabacum (Common tobacco)).